A 321-amino-acid polypeptide reads, in one-letter code: Transmembrane protein fend (321 aa).

The signal sequence occupies residues 1–18; the sequence is MFHSLVLMACALAALSVA. The Extracellular segment spans residues 19–261; that stretch reads QGAGSARSKS…ALPTPSELGG (243 aa). The helical transmembrane segment at 262-282 threads the bilayer; that stretch reads VVYPAFGALAFFLALLVMFLF. The Cytoplasmic segment spans residues 283-321; sequence LRPQRKRFPLDADSADTATLIGRSSSSSRNSMDASTLHV.

It localises to the membrane. Its function is as follows. Involved in the normal targeting of ventral muscle, muscle 12, by motoneurons. May function as an axon guidance molecule involved in neuromuscular specificity. The chain is Transmembrane protein fend (fend) from Drosophila melanogaster (Fruit fly).